The sequence spans 55 residues: Major pollen allergen Dac g 4 (55 aa).

This is Major pollen allergen Dac g 4 from Dactylis glomerata (Orchard grass).